The primary structure comprises 1072 residues: Error-prone DNA polymerase (1072 aa).

The protein belongs to the DNA polymerase type-C family. DnaE2 subfamily.

The protein resides in the cytoplasm. It carries out the reaction DNA(n) + a 2'-deoxyribonucleoside 5'-triphosphate = DNA(n+1) + diphosphate. In terms of biological role, DNA polymerase involved in damage-induced mutagenesis and translesion synthesis (TLS). It is not the major replicative DNA polymerase. The polypeptide is Error-prone DNA polymerase (Burkholderia pseudomallei (strain K96243)).